The sequence spans 333 residues: 4-hydroxy-3-methylbut-2-enyl diphosphate reductase (333 aa).

Cys34 lines the [4Fe-4S] cluster pocket. (2E)-4-hydroxy-3-methylbut-2-enyl diphosphate contacts are provided by His63 and His96. The dimethylallyl diphosphate site is built by His63 and His96. Residues His63 and His96 each contribute to the isopentenyl diphosphate site. Cys118 is a [4Fe-4S] cluster binding site. His146 is a (2E)-4-hydroxy-3-methylbut-2-enyl diphosphate binding site. His146 provides a ligand contact to dimethylallyl diphosphate. His146 is a binding site for isopentenyl diphosphate. Catalysis depends on Glu148, which acts as the Proton donor. A (2E)-4-hydroxy-3-methylbut-2-enyl diphosphate-binding site is contributed by Thr186. A [4Fe-4S] cluster-binding site is contributed by Cys216. The (2E)-4-hydroxy-3-methylbut-2-enyl diphosphate site is built by Ser244, Ser245, Asn246, and Ser289. Residues Ser244, Ser245, Asn246, and Ser289 each coordinate dimethylallyl diphosphate. The isopentenyl diphosphate site is built by Ser244, Ser245, Asn246, and Ser289.

The protein belongs to the IspH family. Requires [4Fe-4S] cluster as cofactor.

It catalyses the reaction isopentenyl diphosphate + 2 oxidized [2Fe-2S]-[ferredoxin] + H2O = (2E)-4-hydroxy-3-methylbut-2-enyl diphosphate + 2 reduced [2Fe-2S]-[ferredoxin] + 2 H(+). The enzyme catalyses dimethylallyl diphosphate + 2 oxidized [2Fe-2S]-[ferredoxin] + H2O = (2E)-4-hydroxy-3-methylbut-2-enyl diphosphate + 2 reduced [2Fe-2S]-[ferredoxin] + 2 H(+). Its pathway is isoprenoid biosynthesis; dimethylallyl diphosphate biosynthesis; dimethylallyl diphosphate from (2E)-4-hydroxy-3-methylbutenyl diphosphate: step 1/1. It participates in isoprenoid biosynthesis; isopentenyl diphosphate biosynthesis via DXP pathway; isopentenyl diphosphate from 1-deoxy-D-xylulose 5-phosphate: step 6/6. Functionally, catalyzes the conversion of 1-hydroxy-2-methyl-2-(E)-butenyl 4-diphosphate (HMBPP) into a mixture of isopentenyl diphosphate (IPP) and dimethylallyl diphosphate (DMAPP). Acts in the terminal step of the DOXP/MEP pathway for isoprenoid precursor biosynthesis. In Mycolicibacterium gilvum (strain PYR-GCK) (Mycobacterium gilvum (strain PYR-GCK)), this protein is 4-hydroxy-3-methylbut-2-enyl diphosphate reductase.